The following is a 713-amino-acid chain: Low-density lipoprotein receptor-related protein 10 (713 aa).

The signal sequence occupies residues 1–16; the sequence is MLLATLLLLLLGGALA. At 17-440 the chain is on the extracellular side; it reads HPDRIIFPNH…WDCSYVLPRK (424 aa). 2 disulfide bridges follow: Cys-28–Cys-57 and Cys-80–Cys-98. Residues 28–136 form the CUB 1 domain; the sequence is CEDPPAVLLE…QGFLLSYSQD (109 aa). An N-linked (GlcNAc...) asparagine glycan is attached at Asn-56. N-linked (GlcNAc...) asparagine glycosylation occurs at Asn-111. In terms of domain architecture, LDL-receptor class A 1 spans 139-175; it reads MCLQEEFQCLNHRCVSAVQRCDGVDACGDGSDEAGCS. 4 cysteine pairs are disulfide-bonded: Cys-140/Cys-152, Cys-147/Cys-165, Cys-159/Cys-174, and Cys-192/Cys-220. The region spanning 192–305 is the CUB 2 domain; sequence CNVTLEDFYG…RGFNATYHVR (114 aa). N-linked (GlcNAc...) asparagine glycans are attached at residues Asn-193 and Asn-299. 3 LDL-receptor class A domains span residues 307 to 354, 355 to 397, and 398 to 434; these read YCLP…EDCP, GCPP…RRCR, and HCQPGNFRCRDEKCVYETWVCDGQPDCADGSDEWDCS. 9 cysteine pairs are disulfide-bonded: Cys-308-Cys-331, Cys-315-Cys-344, Cys-338-Cys-353, Cys-356-Cys-374, Cys-363-Cys-387, Cys-381-Cys-396, Cys-399-Cys-411, Cys-406-Cys-424, and Cys-418-Cys-433. Residues 441 to 461 form a helical membrane-spanning segment; sequence VITAAVIGSLVCGLLLVIALG. Over 462–713 the chain is Cytoplasmic; sequence CTCKLYAIRT…AEAEDEPLLT (252 aa). Residues 564–637 form a disordered region; it reads GLLPRTNTPA…SPAPTTVPEA (74 aa). Polar residues predominate over residues 569 to 584; that stretch reads TNTPARASEARSQVTP. At Thr-596 the chain carries Phosphothreonine. Positions 621-636 are enriched in low complexity; that stretch reads PLPSASTSPAPTTVPE.

It belongs to the LDLR family. In terms of tissue distribution, expressed in blood leukocyte, lung, placenta, small intestine, liver, kidney, spleen, thymus, colon, skeletal muscle and heart.

It localises to the membrane. It is found in the coated pit. Functionally, probable receptor, which is involved in the internalization of lipophilic molecules and/or signal transduction. May be involved in the uptake of lipoprotein APOE in liver. The polypeptide is Low-density lipoprotein receptor-related protein 10 (LRP10) (Homo sapiens (Human)).